The primary structure comprises 465 residues: GTPase Der (465 aa).

EngA-type G domains follow at residues 3–166 (FLVA…LNEY) and 184–358 (IHFS…ACAN). GTP-binding positions include 9–16 (GRANVGKS), 56–60 (DTGGI), 118–121 (NKVD), 190–197 (GRPNVGKS), 237–241 (DTAGV), and 302–305 (NKWD). The KH-like domain maps to 359-443 (KKITTADATR…PIVFEFKQSE (85 aa)). The interval 446-465 (FADRKNKRSKDEGSKSKKVK) is disordered.

This sequence belongs to the TRAFAC class TrmE-Era-EngA-EngB-Septin-like GTPase superfamily. EngA (Der) GTPase family. In terms of assembly, associates with the 50S ribosomal subunit.

In terms of biological role, GTPase that plays an essential role in the late steps of ribosome biogenesis. The protein is GTPase Der of Francisella tularensis subsp. tularensis (strain WY96-3418).